Reading from the N-terminus, the 107-residue chain is YcgL domain-containing protein Pcryo_0807 (107 aa).

The YcgL domain occupies 1 to 95; the sequence is MHCDIYKFLK…QDVMRRQAEL (95 aa).

The sequence is that of YcgL domain-containing protein Pcryo_0807 from Psychrobacter cryohalolentis (strain ATCC BAA-1226 / DSM 17306 / VKM B-2378 / K5).